The chain runs to 97 residues: Coiled-coil domain-containing protein 167 (97 aa).

Positions 2–78 (TKKKRENLGV…LLRHENRKNT (77 aa)) form a coiled coil. Residues 78-95 (TLLSVAIFTVFALLYAYW) form a helical membrane-spanning segment.

The protein localises to the membrane. This chain is Coiled-coil domain-containing protein 167 (Ccdc167), found in Mus musculus (Mouse).